We begin with the raw amino-acid sequence, 90 residues long: Mitochondrial import inner membrane translocase subunit Tim10 (90 aa).

The short motif at 29 to 54 is the Twin CX3C motif element; that stretch reads CHRKCVPPHYKEAELSKGESVCLDRC. Intrachain disulfides connect Cys-29/Cys-54 and Cys-33/Cys-50.

This sequence belongs to the small Tim family. As to quaternary structure, heterohexamer; composed of 3 copies of TIMM9 and 3 copies of TIMM10/TIM10A, named soluble 70 kDa complex. The complex forms a 6-bladed alpha-propeller structure and associates with the TIMM22 component of the TIM22 complex. Interacts with multi-pass transmembrane proteins in transit. Also forms a complex composed of TIMM9, TIMM10/TIM10A and FXC1/TIM10B.

Its subcellular location is the mitochondrion inner membrane. Functionally, mitochondrial intermembrane chaperone that participates in the import and insertion of multi-pass transmembrane proteins into the mitochondrial inner membrane. May also be required for the transfer of beta-barrel precursors from the TOM complex to the sorting and assembly machinery (SAM complex) of the outer membrane. Acts as a chaperone-like protein that protects the hydrophobic precursors from aggregation and guide them through the mitochondrial intermembrane space. The sequence is that of Mitochondrial import inner membrane translocase subunit Tim10 (Timm10) from Rattus norvegicus (Rat).